Consider the following 479-residue polypeptide: Anaerobic nitric oxide reductase flavorubredoxin (479 aa).

Residues 30-210 (LRGSSYNSYL…PFSRLVTPKI (181 aa)) are zinc metallo-hydrolase. 6 residues coordinate Fe cation: histidine 79, glutamate 81, aspartate 83, histidine 147, aspartate 166, and histidine 227. The Flavodoxin-like domain maps to 254-393 (ITIFYDTMSN…LCREHGREIA (140 aa)). Residues 260-264 (TMSNN) and 342-369 (AFGS…EMSL) each bind FMN. The region spanning 423–479 (GPRMQCSVCQWIYDPAKGEPMQDVAPGTPWSEVPDNFLCPECSLGKDVFEELASEAK) is the Rubredoxin-like domain. Fe cation is bound by residues cysteine 428, cysteine 431, cysteine 461, and cysteine 464.

In the N-terminal section; belongs to the zinc metallo-hydrolase group 3 family. In terms of assembly, homotetramer. Requires Fe cation as cofactor. The cofactor is FMN.

The protein localises to the cytoplasm. Its pathway is nitrogen metabolism; nitric oxide reduction. In terms of biological role, anaerobic nitric oxide reductase; uses NADH to detoxify nitric oxide (NO), protecting several 4Fe-4S NO-sensitive enzymes. Has at least 2 reductase partners, only one of which (NorW, flavorubredoxin reductase) has been identified. NO probably binds to the di-iron center; electrons enter from the reductase at rubredoxin and are transferred sequentially to the FMN center and the di-iron center. Also able to function as an aerobic oxygen reductase. This chain is Anaerobic nitric oxide reductase flavorubredoxin (norV), found in Escherichia coli (strain K12 / DH10B).